The sequence spans 404 residues: Phosphoribulokinase, chloroplastic (404 aa).

A chloroplast-targeting transit peptide spans 1 to 53 (MAFCSPHTTTSLRSPCTTIPNSGFRQNQVIFFTTRSSRRSNTRHGARTFQVSC). Cysteines 69 and 108 form a disulfide.

This sequence belongs to the phosphoribulokinase family.

The protein localises to the plastid. Its subcellular location is the chloroplast. The enzyme catalyses D-ribulose 5-phosphate + ATP = D-ribulose 1,5-bisphosphate + ADP + H(+). Its pathway is carbohydrate biosynthesis; Calvin cycle. Light regulated via thioredoxin by reversible oxidation/reduction of sulfhydryl/disulfide groups. In Triticum aestivum (Wheat), this protein is Phosphoribulokinase, chloroplastic.